The primary structure comprises 304 residues: Meiotically up-regulated gene 86 protein (304 aa).

A compositionally biased stretch (low complexity) spans M1 to S12. The disordered stretch occupies residues M1–F23. 6 consecutive transmembrane segments (helical) span residues P93–V113, M123–E143, F150–I170, A188–V208, L212–F232, and V247–L267.

This sequence belongs to the acetate uptake transporter (AceTr) (TC 2.A.96) family.

The protein localises to the endoplasmic reticulum membrane. It is found in the golgi apparatus. The protein resides in the golgi stack membrane. It localises to the vacuole membrane. In terms of biological role, has a role in meiosis. The sequence is that of Meiotically up-regulated gene 86 protein (mug86) from Schizosaccharomyces pombe (strain 972 / ATCC 24843) (Fission yeast).